A 394-amino-acid polypeptide reads, in one-letter code: Protein TsgA homolog (394 aa).

The next 12 membrane-spanning stretches (helical) occupy residues 11–31, 51–71, 76–96, 101–121, 134–154, 162–182, 206–226, 251–271, 274–294, 302–322, 334–354, and 363–383; these read WISYFSYALTGALVIVTGMVM, FLNAGILISIFLNAWLMEIIP, LMFGFVLMVLAIAGLMLGKSL, LCMFILGVVSGITMSIGTFLI, LLFTDSFFSMAGMIFPIVAAM, WYWVYACIGLLYVGIFVLTLF, IGVLFLSIAALCYILGQLGFI, FWTSYMIGMWVFSFILRFFDL, IVTILAALATGAMYLFVSTDN, IMALGFVSSAIYTTLITLGSL, FILTCGTIGTMLTFVVTGPIV, and LTTANGLYLAVFVMCLLLGFV.

Belongs to the major facilitator superfamily. TsgA family.

The protein localises to the cell inner membrane. In Serratia proteamaculans (strain 568), this protein is Protein TsgA homolog.